The chain runs to 25 residues: Neuromedin-U-25 (25 aa).

Asparagine 25 is modified (asparagine amide).

Belongs to the NmU family.

The protein localises to the secreted. In terms of biological role, stimulates uterine smooth muscle contraction and causes selective vasoconstriction. The protein is Neuromedin-U-25 (NMU) of Oryctolagus cuniculus (Rabbit).